Here is a 174-residue protein sequence, read N- to C-terminus: Large ribosomal subunit protein uL15 (174 aa).

Disordered stretches follow at residues methionine 1–isoleucine 57 and proline 147–alanine 174. Gly residues predominate over residues arginine 21–methionine 35.

This sequence belongs to the universal ribosomal protein uL15 family. As to quaternary structure, part of the 50S ribosomal subunit.

Functionally, binds to the 23S rRNA. This chain is Large ribosomal subunit protein uL15, found in Roseiflexus sp. (strain RS-1).